The chain runs to 511 residues: UDP-N-acetylhexosamine pyrophosphorylase-like protein 1 (511 aa).

A compositionally biased stretch (basic and acidic residues) spans 1–19 (MDRSESAESAESRRRRAEE). The tract at residues 1-22 (MDRSESAESAESRRRRAEESGQ) is disordered. The short motif at 117–120 (LAGG) is the Substrate binding element. UTP contacts are provided by residues 117–120 (LAGG), lysine 131, glutamine 205, and glycine 231. A substrate-binding site is contributed by asparagine 232. Aspartate 262 provides a ligand contact to UTP. A Substrate binding motif is present at residues 312 to 313 (EY). Lysine 386 provides a ligand contact to UTP. Position 416 (lysine 416) interacts with substrate.

Belongs to the UDPGP type 1 family.

This chain is UDP-N-acetylhexosamine pyrophosphorylase-like protein 1 (uap1l1), found in Xenopus tropicalis (Western clawed frog).